Reading from the N-terminus, the 415-residue chain is tRNA (cytosine(38)-C(5))-methyltransferase (415 aa).

Residues 4–396 (LRVLELYSGI…TVLCEGFGNA (393 aa)) form the SAM-dependent MTase C5-type domain. Residues 13–15 (IGG), D34, 57–58 (IE), and S76 each bind S-adenosyl-L-methionine. C79 is a catalytic residue. Position 376 (S376) interacts with S-adenosyl-L-methionine.

Belongs to the class I-like SAM-binding methyltransferase superfamily. C5-methyltransferase family. Highly expressed in thymus, testis, and at much lower levels in spleen, lung, brain, heart, kidney, liver, skeletal muscle and embryonic stem cells.

It localises to the cytoplasm. It carries out the reaction cytidine(38) in tRNA + S-adenosyl-L-methionine = 5-methylcytidine(38) in tRNA + S-adenosyl-L-homocysteine + H(+). Functionally, specifically methylates cytosine 38 in the anticodon loop of tRNA(Asp). Has higher activity on tRNA(Asp) modified with queuosine at position 34. The sequence is that of tRNA (cytosine(38)-C(5))-methyltransferase (Trdmt1) from Mus musculus (Mouse).